We begin with the raw amino-acid sequence, 282 residues long: Protein MGF 505-3R (282 aa).

This sequence belongs to the asfivirus MGF 505 family.

In terms of biological role, plays a role in virus cell tropism, and may be required for efficient virus replication in macrophages. The sequence is that of Protein MGF 505-3R from Ornithodoros (relapsing fever ticks).